The sequence spans 142 residues: Hemoglobin subunit alpha (142 aa).

In terms of domain architecture, Globin spans 2–142; the sequence is VLSGEDKSNI…VSTVLTSKYR (141 aa). Ser-4 carries the post-translational modification Phosphoserine. Lys-8 and Lys-12 each carry N6-succinyllysine. Lys-17 carries the post-translational modification N6-acetyllysine; alternate. Lys-17 is modified (N6-succinyllysine; alternate). Tyr-25 carries the post-translational modification Phosphotyrosine. The residue at position 36 (Ser-36) is a Phosphoserine. Lys-41 is modified (N6-succinyllysine). Ser-50 is modified (phosphoserine). His-59 contributes to the O2 binding site. Residue His-88 participates in heme b binding. Ser-103 carries the post-translational modification Phosphoserine. Position 109 is a phosphothreonine (Thr-109). Ser-112, Ser-125, and Ser-132 each carry phosphoserine. Thr-135 and Thr-138 each carry phosphothreonine. Position 139 is a phosphoserine (Ser-139).

The protein belongs to the globin family. In terms of assembly, heterotetramer of two alpha chains and two beta chains. In terms of tissue distribution, red blood cells.

Involved in oxygen transport from the lung to the various peripheral tissues. Functionally, hemopressin acts as an antagonist peptide of the cannabinoid receptor CNR1. Hemopressin-binding efficiently blocks cannabinoid receptor CNR1 and subsequent signaling. In Mus musculus (Mouse), this protein is Hemoglobin subunit alpha (Hba).